Consider the following 480-residue polypeptide: Aspartyl/glutamyl-tRNA(Asn/Gln) amidotransferase subunit B (480 aa).

This sequence belongs to the GatB/GatE family. GatB subfamily. In terms of assembly, heterotrimer of A, B and C subunits.

The catalysed reaction is L-glutamyl-tRNA(Gln) + L-glutamine + ATP + H2O = L-glutaminyl-tRNA(Gln) + L-glutamate + ADP + phosphate + H(+). It carries out the reaction L-aspartyl-tRNA(Asn) + L-glutamine + ATP + H2O = L-asparaginyl-tRNA(Asn) + L-glutamate + ADP + phosphate + 2 H(+). In terms of biological role, allows the formation of correctly charged Asn-tRNA(Asn) or Gln-tRNA(Gln) through the transamidation of misacylated Asp-tRNA(Asn) or Glu-tRNA(Gln) in organisms which lack either or both of asparaginyl-tRNA or glutaminyl-tRNA synthetases. The reaction takes place in the presence of glutamine and ATP through an activated phospho-Asp-tRNA(Asn) or phospho-Glu-tRNA(Gln). The protein is Aspartyl/glutamyl-tRNA(Asn/Gln) amidotransferase subunit B of Streptococcus thermophilus (strain ATCC BAA-491 / LMD-9).